Reading from the N-terminus, the 199-residue chain is dTTP/UTP pyrophosphatase (199 aa).

The Proton acceptor role is filled by Asp73.

It belongs to the Maf family. YhdE subfamily. Requires a divalent metal cation as cofactor.

It localises to the cytoplasm. The catalysed reaction is dTTP + H2O = dTMP + diphosphate + H(+). It carries out the reaction UTP + H2O = UMP + diphosphate + H(+). Nucleoside triphosphate pyrophosphatase that hydrolyzes dTTP and UTP. May have a dual role in cell division arrest and in preventing the incorporation of modified nucleotides into cellular nucleic acids. This Caldicellulosiruptor bescii (strain ATCC BAA-1888 / DSM 6725 / KCTC 15123 / Z-1320) (Anaerocellum thermophilum) protein is dTTP/UTP pyrophosphatase.